A 307-amino-acid polypeptide reads, in one-letter code: Glycerol-3-phosphate dehydrogenase [NAD(P)+] (307 aa).

NADPH is bound by residues F11, R31, and K95. Sn-glycerol 3-phosphate is bound by residues K95, G121, and S123. A125 lines the NADPH pocket. Positions 176, 229, 239, 240, and 241 each coordinate sn-glycerol 3-phosphate. Residue K176 is the Proton acceptor of the active site. R240 provides a ligand contact to NADPH. Position 261 (E261) interacts with NADPH.

Belongs to the NAD-dependent glycerol-3-phosphate dehydrogenase family.

The protein resides in the cytoplasm. It carries out the reaction sn-glycerol 3-phosphate + NAD(+) = dihydroxyacetone phosphate + NADH + H(+). The enzyme catalyses sn-glycerol 3-phosphate + NADP(+) = dihydroxyacetone phosphate + NADPH + H(+). Its pathway is membrane lipid metabolism; glycerophospholipid metabolism. Its function is as follows. Catalyzes the reduction of the glycolytic intermediate dihydroxyacetone phosphate (DHAP) to sn-glycerol 3-phosphate (G3P), the key precursor for phospholipid synthesis. The sequence is that of Glycerol-3-phosphate dehydrogenase [NAD(P)+] from Jannaschia sp. (strain CCS1).